Consider the following 215-residue polypeptide: uncharacterized protein (215 aa).

Residues G53, E74, and D97 each coordinate S-adenosyl-L-methionine.

Belongs to the methyltransferase superfamily. YrrT family.

Functionally, could be a S-adenosyl-L-methionine-dependent methyltransferase. This is an uncharacterized protein from Geobacillus thermodenitrificans (strain NG80-2).